Reading from the N-terminus, the 208-residue chain is V-type ATP synthase subunit D (208 aa).

This sequence belongs to the V-ATPase D subunit family.

Functionally, produces ATP from ADP in the presence of a proton gradient across the membrane. This chain is V-type ATP synthase subunit D, found in Chlamydia felis (strain Fe/C-56) (Chlamydophila felis).